The chain runs to 126 residues: Succinate dehydrogenase hydrophobic membrane anchor subunit (126 aa).

The Cytoplasmic segment spans residues 1–24 (MVYDFKAEIVKAKNSGSAKSGSHH). A helical transmembrane segment spans residues 25–45 (WLLQRVTGIILALCSVWLIYF). Residues 46–68 (TLTNKNNDINIIMLWELKKPFNV) lie on the Periplasmic side of the membrane. The chain crosses the membrane as a helical span at residues 69–90 (VALLITVVISLYHAMLGMRVVI). His81 lines the heme pocket. Topologically, residues 91-100 (EDYISYHKLR) are cytoplasmic. Residue Tyr93 coordinates a ubiquinone. A helical transmembrane segment spans residues 101–124 (NTLIIIVQLFCIVTIVAFVVALFY).

Part of an enzyme complex containing four subunits: a flavoprotein, an iron-sulfur protein, plus two membrane-anchoring proteins, SdhC and SdhD. Heme serves as cofactor.

It localises to the cell inner membrane. It participates in carbohydrate metabolism; tricarboxylic acid cycle. Functionally, membrane-anchoring subunit of succinate dehydrogenase (SDH). This chain is Succinate dehydrogenase hydrophobic membrane anchor subunit (sdhD), found in Rickettsia conorii (strain ATCC VR-613 / Malish 7).